The sequence spans 408 residues: Apoptosis-inducing factor homolog A (408 aa).

FAD-binding positions include 34 to 38 (GCGFG), R69, and D314.

Belongs to the FAD-dependent oxidoreductase family. FAD is required as a cofactor.

In terms of biological role, putative FAD-dependent oxidoreductase. This is Apoptosis-inducing factor homolog A (aifA) from Dictyostelium discoideum (Social amoeba).